Here is a 792-residue protein sequence, read N- to C-terminus: Probable exo-1,4-beta-xylosidase xlnD (792 aa).

Residues 1–20 form the signal peptide; sequence MSVAKSIAAVLVALLPGALA. N-linked (GlcNAc...) asparagine glycans are attached at residues Asn-23, Asn-87, Asn-118, Asn-142, and Asn-246. Asp-310 is an active-site residue. N-linked (GlcNAc...) asparagine glycosylation is found at Asn-326, Asn-385, Asn-404, Asn-440, Asn-477, Asn-518, Asn-679, and Asn-701.

Belongs to the glycosyl hydrolase 3 family.

It is found in the secreted. It carries out the reaction Hydrolysis of (1-&gt;4)-beta-D-xylans, to remove successive D-xylose residues from the non-reducing termini.. Its pathway is glycan degradation; xylan degradation. Its function is as follows. Xylan 1,4-beta-xylosidase involved in the hydrolysis of xylan, a major structural heterogeneous polysaccharide found in plant biomass representing the second most abundant polysaccharide in the biosphere, after cellulose. In Aspergillus fumigatus (strain CBS 144.89 / FGSC A1163 / CEA10) (Neosartorya fumigata), this protein is Probable exo-1,4-beta-xylosidase xlnD (xlnD).